The primary structure comprises 241 residues: Triosephosphate isomerase (241 aa).

9 to 11 (NWK) is a binding site for substrate. The Electrophile role is filled by His96. Glu165 functions as the Proton acceptor in the catalytic mechanism. Substrate-binding positions include Gly171, Ser204, and 225–226 (GG).

It belongs to the triosephosphate isomerase family. As to quaternary structure, homodimer.

The protein resides in the cytoplasm. The catalysed reaction is D-glyceraldehyde 3-phosphate = dihydroxyacetone phosphate. It participates in carbohydrate biosynthesis; gluconeogenesis. Its pathway is carbohydrate degradation; glycolysis; D-glyceraldehyde 3-phosphate from glycerone phosphate: step 1/1. In terms of biological role, involved in the gluconeogenesis. Catalyzes stereospecifically the conversion of dihydroxyacetone phosphate (DHAP) to D-glyceraldehyde-3-phosphate (G3P). The sequence is that of Triosephosphate isomerase from Picosynechococcus sp. (strain ATCC 27264 / PCC 7002 / PR-6) (Agmenellum quadruplicatum).